The chain runs to 172 residues: MERVIQGNDAREQANGERWDGGSGGTTSGFKLPDESPSWTEWRIHNDETDSNKDNPLGFKESWGFGKVVFKRYLRYDRTETSLHRVLGSWTGDSVNYAASRFLGVNQIGCTYSIRFRGVSVTISGGSRTLQHICEMAIRSKQELLQLAPVEVESNVSRGRPEGAEAFKEESE.

A compositionally biased stretch (basic and acidic residues) spans 1–20; the sequence is MERVIQGNDAREQANGERWD. The segment at 1–37 is disordered; the sequence is MERVIQGNDAREQANGERWDGGSGGTTSGFKLPDESP.

It belongs to the tombusvirus protein p19 family. In terms of assembly, homodimer.

Functionally, viral suppressor of RNA silencing which binds specifically to silencing RNAs (siRNAs). Acts as a molecular caliper to specifically select siRNAs based on the length of the duplex region of the RNA. The sequence is that of RNA silencing suppressor p19 from Cynara cardunculus var. scolymus (Globe artichoke).